The primary structure comprises 1062 residues: Probable sucrose-phosphate synthase 3 (1062 aa).

Basic and acidic residues predominate over residues Glu113–Thr122. The segment at Glu113 to Ile141 is disordered. 3 positions are modified to phosphoserine: Ser126, Ser130, and Ser156. Positions Met715 to Lys735 are disordered.

The protein belongs to the glycosyltransferase 1 family. As to quaternary structure, homodimer or homotetramer.

It catalyses the reaction beta-D-fructose 6-phosphate + UDP-alpha-D-glucose = sucrose 6(F)-phosphate + UDP + H(+). The protein operates within glycan biosynthesis; sucrose biosynthesis; sucrose from D-fructose 6-phosphate and UDP-alpha-D-glucose: step 1/2. With respect to regulation, activity is regulated by phosphorylation and moderated by concentration of metabolites and light. In terms of biological role, plays a role in photosynthetic sucrose synthesis by catalyzing the rate-limiting step of sucrose biosynthesis from UDP-glucose and fructose- 6-phosphate. Involved in the regulation of carbon partitioning in the leaves of plants. May regulate the synthesis of sucrose and therefore play a major role as a limiting factor in the export of photoassimilates out of the leaf. Plays a role for sucrose availability that is essential for plant growth and fiber elongation. This is Probable sucrose-phosphate synthase 3 (SPS3) from Arabidopsis thaliana (Mouse-ear cress).